We begin with the raw amino-acid sequence, 463 residues long: Chaperone SurA (463 aa).

The first 25 residues, 1-25 (MTKPFSVVLASLLAITSTISPLASA), serve as a signal peptide directing secretion. 2 consecutive PpiC domains span residues 174–276 (GSKY…KLME) and 289–388 (VTEY…QRVG). 2 disordered regions span residues 329–348 (ATAK…GDLG) and 434–463 (GDRA…KPTR). Positions 439–452 (NNATAAPAKSADPA) are enriched in low complexity. Residues 453 to 463 (LPAPPPAKPTR) are compositionally biased toward pro residues.

It is found in the periplasm. It catalyses the reaction [protein]-peptidylproline (omega=180) = [protein]-peptidylproline (omega=0). Chaperone involved in the correct folding and assembly of outer membrane proteins. Recognizes specific patterns of aromatic residues and the orientation of their side chains, which are found more frequently in integral outer membrane proteins. May act in both early periplasmic and late outer membrane-associated steps of protein maturation. The chain is Chaperone SurA from Xanthomonas oryzae pv. oryzae (strain MAFF 311018).